The following is a 165-amino-acid chain: uncharacterized protein (165 aa).

The N-acetyltransferase domain maps to 8–159 (LLVNYKTLEE…QGVQEQTTKP (152 aa)).

This is an uncharacterized protein from Shouchella clausii (strain KSM-K16) (Alkalihalobacillus clausii).